Consider the following 1122-residue polypeptide: Histone deacetylase 5 (1122 aa).

The segment at 1-22 (MNSPNESDGMSGREPSLEILPR) is disordered. Lysine 35 is covalently cross-linked (Glycyl lysine isopeptide (Lys-Gly) (interchain with G-Cter in SUMO2)). Positions 196–281 (KEPTPGGLNH…KVAERRSSPL (86 aa)) are disordered. The span at 247 to 258 (DSRDDFPLRKTA) shows a compositional bias: basic and acidic residues. At serine 259 the chain carries Phosphoserine; by AMPK, CaMK1, SIK1 and PKD/PRKD1. Residues 272 to 281 (KVAERRSSPL) are compositionally biased toward basic and acidic residues. Threonine 292 carries the post-translational modification Phosphothreonine; by PKC. Disordered regions lie at residues 302–343 (GAGP…NIPT) and 481–504 (MRTV…LPQS). Residues 312 to 327 (NSAPGSGPSSPNSSHS) show a composition bias toward low complexity. Polar residues predominate over residues 328 to 340 (TIAENGFTGSVPN). The span at 494 to 504 (SRTQSSPLPQS) shows a compositional bias: low complexity. Position 498 is a phosphoserine; by AMPK, CaMK1, SIK1 and PKD/PRKD1 (serine 498). Lysine 533 is modified (N6-acetyllysine). The tract at residues 536-625 (TKTGELPRQP…GPDLEEPGAG (90 aa)) is disordered. Residues 581 to 621 (STQEDLEEEDEEEDGEEEEDCIQVKDEEGESGAEEGPDLEE) are compositionally biased toward acidic residues. Phosphoserine is present on residues serine 611 and serine 661. A histone deacetylase region spans residues 684 to 1028 (GVVYDTFMLK…VSALLSVELQ (345 aa)). 4 residues coordinate Zn(2+): cysteine 696, cysteine 698, histidine 704, and cysteine 781. The active site involves histidine 833. The Nuclear export signal signature appears at 1081–1122 (EEAETVSAMALLSVGAEQAQAAAAREHSPRPAEEPMEQEPAL). Positions 1097–1122 (EQAQAAAAREHSPRPAEEPMEQEPAL) are disordered. Positions 1104–1113 (AREHSPRPAE) are enriched in basic and acidic residues. Position 1108 is a phosphoserine (serine 1108).

The protein belongs to the histone deacetylase family. HD type 2 subfamily. In terms of assembly, interacts with AHRR, BAHD1, BCOR, HDAC7, HDAC9, CTBP1, MEF2C, NCOR2, NRIP1, PHB2 and a 14-3-3 chaperone protein. Interacts with BCL6, DDIT3/CHOP, GRK5, KDM5B and MYOCD. Interacts with EP300 in the presence of TFAP2C. Interacts with ANKRA2. Interacts with CUL7 (as part of the 3M complex); negatively regulated by ANKRA2. Interacts with ZBTB7B; the interaction allows the recruitment of HDAC4 on CD8 loci for deacetylation and possible inhibition of CD8 genes expression. Interacts with RARA. In terms of processing, phosphorylated by AMPK, CaMK1, SIK1 and PRKD1 at Ser-259 and Ser-498. The phosphorylation is required for the export to the cytoplasm and inhibition. Phosphorylated by the PKC kinases PKN1 and PKN2, impairing nuclear import. Phosphorylated by GRK5, leading to nuclear export of HDAC5 and allowing MEF2-mediated transcription. Post-translationally, ubiquitinated. Polyubiquitination however does not lead to its degradation.

It localises to the nucleus. The protein localises to the cytoplasm. It carries out the reaction N(6)-acetyl-L-lysyl-[histone] + H2O = L-lysyl-[histone] + acetate. In terms of biological role, responsible for the deacetylation of lysine residues on the N-terminal part of the core histones (H2A, H2B, H3 and H4). Histone deacetylation gives a tag for epigenetic repression and plays an important role in transcriptional regulation, cell cycle progression and developmental events. Histone deacetylases act via the formation of large multiprotein complexes. Involved in muscle maturation by repressing transcription of myocyte enhancer MEF2C. During muscle differentiation, it shuttles into the cytoplasm, allowing the expression of myocyte enhancer factors. Serves as a corepressor of RARA and causes its deacetylation. In association with RARA, plays a role in the repression of microRNA-10a and thereby in the inflammatory response. The polypeptide is Histone deacetylase 5 (HDAC5) (Pongo abelii (Sumatran orangutan)).